The following is a 236-amino-acid chain: 2,3,4,5-tetrahydropyridine-2,6-dicarboxylate N-acetyltransferase (236 aa).

Belongs to the transferase hexapeptide repeat family. DapH subfamily.

It carries out the reaction (S)-2,3,4,5-tetrahydrodipicolinate + acetyl-CoA + H2O = L-2-acetamido-6-oxoheptanedioate + CoA. Its pathway is amino-acid biosynthesis; L-lysine biosynthesis via DAP pathway; LL-2,6-diaminopimelate from (S)-tetrahydrodipicolinate (acetylase route): step 1/3. Its function is as follows. Catalyzes the transfer of an acetyl group from acetyl-CoA to tetrahydrodipicolinate. In Clostridium botulinum (strain Eklund 17B / Type B), this protein is 2,3,4,5-tetrahydropyridine-2,6-dicarboxylate N-acetyltransferase.